We begin with the raw amino-acid sequence, 318 residues long: MSQPLNSNPEVLLRKRRNADRTRLEKQELAKKRKEQEEKQKRSKKNRFVRAETIVATTLATEREKTRIRRVRDLENQKVKNDLSHIPSDRDFILRISEREAGSKATSESELQDVDEEDEEDDGLIREKIVYDGEPSLLFVIRVKGPTAVKIPAKAYKVLSLLRLVELNTGVFIKLTKDVYPLLKLVSPYIVIGQPSLASIRSLIQKRSRIMWQRPEDKEPKEIILNDNNIVEEKLGDEGVICIEDIIHEISTLGENFSKCTFFLLPFKLNREVSGFGAISRLNKLKMREQNKKTRQISNAATAPVIQVDIDSMISKLN.

Disordered stretches follow at residues Met-1–Val-49 and Ala-101–Asp-121. The segment covering Ala-19–Gln-40 has biased composition (basic and acidic residues). Over residues Glu-110–Asp-121 the composition is skewed to acidic residues.

It belongs to the universal ribosomal protein uL30 family.

The protein resides in the nucleus. Its subcellular location is the nucleolus. Functionally, involved in the biogenesis of the 60S ribosomal subunit. May act as a specificity factor that binds precursor rRNAs and tethers the enzymes that carry out the early 5' to 3' exonucleolytic reactions that generate the mature rRNAs. This chain is Ribosome biogenesis protein RLP7 (RLP7), found in Kluyveromyces lactis (strain ATCC 8585 / CBS 2359 / DSM 70799 / NBRC 1267 / NRRL Y-1140 / WM37) (Yeast).